The chain runs to 276 residues: Aquaporin-6 (276 aa).

Residues Met-1 to Lys-22 lie on the Cytoplasmic side of the membrane. Residues Ala-23–Leu-43 traverse the membrane as a helical segment. The Extracellular segment spans residues Pro-44 to Ser-51. Residues Val-52 to Ser-70 form a helical membrane-spanning segment. The Cytoplasmic portion of the chain corresponds to Trp-71–Gly-75. An intramembrane region (discontinuously helical) is located at residues Ala-76–Ala-85. Positions Asn-79–Ala-81 match the NPA 1 motif. Residues Tyr-86–Arg-96 are Cytoplasmic-facing. A helical transmembrane segment spans residues Ala-97–Val-118. The Extracellular segment spans residues Thr-119–Thr-138. An N-linked (GlcNAc...) asparagine glycan is attached at Asn-134. A helical membrane pass occupies residues Gly-139–Ser-159. The Cytoplasmic segment spans residues Met-160–Thr-165. Residues Leu-166–Ile-185 traverse the membrane as a helical segment. The Extracellular portion of the chain corresponds to Tyr-186–Gly-189. The segment at residues Cys-190–Val-202 is an intramembrane region (discontinuously helical). The NPA 2 signature appears at Asn-193–Ala-195. The Extracellular portion of the chain corresponds to Ile-203–His-210. Residues Trp-211–Ile-231 form a helical membrane-spanning segment. Residues Leu-232 to Val-276 are Cytoplasmic-facing.

Belongs to the MIP/aquaporin (TC 1.A.8) family. As to quaternary structure, homotetramer; each monomer provides an independent solute pore. Post-translationally, N-glycosylated. In terms of tissue distribution, kidney.

The protein localises to the cytoplasmic vesicle membrane. It carries out the reaction nitrate(in) = nitrate(out). The catalysed reaction is iodide(out) = iodide(in). The enzyme catalyses bromide(in) = bromide(out). It catalyses the reaction chloride(in) = chloride(out). It carries out the reaction Na(+)(in) = Na(+)(out). The catalysed reaction is H2O(in) = H2O(out). The enzyme catalyses CO2(out) = CO2(in). It catalyses the reaction NH4(+)(in) = NH4(+)(out). With respect to regulation, activated by mercury and pH-gated, anion permeability is observed at pH 5.5 and increases markedly at pH 4.0. Selectivity for chloride increases at low pH. The water channel activity is stimulated by mercury by opposition to other aquaporins. Functionally, aquaporins form homotetrameric transmembrane channels, with each monomer independently mediating water transport across the plasma membrane along its osmotic gradient. Unlike classical aquaporins, AQP6 is an intracellular channel with selective anion permeability, particularly for nitrate, and exhibits very low water permeability. It may also facilitate the transport of gases, such as CO2 and NH4(+), as demonstrated in vitro. The polypeptide is Aquaporin-6 (Rattus norvegicus (Rat)).